Reading from the N-terminus, the 185-residue chain is Homeobox protein TGIF2LY (185 aa).

Disordered regions lie at residues 1–58 (MEAA…GNLP) and 166–185 (RCQE…SSPE). Residues 21–39 (AKTQSPAQDTSIMSRNNAD) are compositionally biased toward polar residues. A DNA-binding region (homeobox; TALE-type) is located at residues 48 to 111 (EHKKKRKGNL…INARRRILPD (64 aa)).

The protein belongs to the TALE/TGIF homeobox family. Specifically expressed in adult testis.

It localises to the nucleus. In terms of biological role, may have a transcription role in testis. May act as a competitor/regulator of TGIF2LX. The protein is Homeobox protein TGIF2LY (TGIF2LY) of Homo sapiens (Human).